The sequence spans 184 residues: Putative manganese efflux pump MntP (184 aa).

The next 6 helical transmembrane spans lie at 3–23 (LLSM…ISVS), 36–56 (ALIS…LGWV), 65–85 (VSAL…LKMI), 103–123 (LLVL…SFAL), 126–146 (ISIW…SLAG), and 163–183 (ALGG…NVSF).

It belongs to the MntP (TC 9.B.29) family.

It is found in the cell membrane. Its function is as follows. Probably functions as a manganese efflux pump. The sequence is that of Putative manganese efflux pump MntP from Methanothermobacter thermautotrophicus (strain ATCC 29096 / DSM 1053 / JCM 10044 / NBRC 100330 / Delta H) (Methanobacterium thermoautotrophicum).